A 20-amino-acid chain; its full sequence is Venom prothrombin activator notanarin-D (20 aa).

In terms of domain architecture, Gla spans 1–10 (SNSLFEEVRP). 4-carboxyglutamate occurs at positions 6 and 7. Residues 11–20 (IVNGMDCKLG) form the Peptidase S1 domain.

The protein belongs to the peptidase S1 family. Snake venom subfamily. Heterodimer of a light chain and a heavy chain; disulfide-linked. Post-translationally, gamma-carboxyglutamate residues are formed by vitamin K dependent carboxylation. These residues are essential for the binding of calcium. In terms of tissue distribution, expressed by the venom gland.

The protein resides in the secreted. It catalyses the reaction Selective cleavage of Arg-|-Thr and then Arg-|-Ile bonds in prothrombin to form thrombin.. Snake prothrombin activator that attacks the hemostatic system of prey. This protein is functionally similar to blood coagulation factor Xa. The protein is Venom prothrombin activator notanarin-D of Notechis scutatus niger (Peninsula tiger snake).